A 933-amino-acid chain; its full sequence is Serine/threonine-protein kinase EDR1 (933 aa).

Residues 1–10 show a composition bias toward basic residues; it reads MKHIFKKLHR. Disordered regions lie at residues 1 to 74, 342 to 424, 527 to 550, and 604 to 650; these read MKHI…ADYM, CNSN…TAIG, HRDPRYGNTQSSYATSSSNGAISS, and HGQQ…YRND. The segment covering 37–48 has biased composition (polar residues); that stretch reads NPPQATPSSVTE. A compositionally biased stretch (low complexity) spans 53-68; it reads AGATSSMASPAPTAAS. Polar residues predominate over residues 342–356; sequence CNSNGNKFPTAQFSN. Positions 367–378 are enriched in low complexity; that stretch reads SSHSSMANYSSS. Residues 379–389 are compositionally biased toward basic and acidic residues; sequence LDRRTEAERTD. Over residues 404 to 413 the composition is skewed to low complexity; it reads SSPSSVTSST. The span at 533–550 shows a compositional bias: polar residues; sequence GNTQSSYATSSSNGAISS. Basic and acidic residues predominate over residues 607–621; the sequence is QNDESHIHDHRKYTS. Residues 669–925 enclose the Protein kinase domain; that stretch reads LVIAERIGLG…QLTEVLKPLN (257 aa). ATP-binding positions include 675–683 and Lys696; that span reads IGLGSYGEV. Asp792 functions as the Proton acceptor in the catalytic mechanism.

Belongs to the protein kinase superfamily. TKL Ser/Thr protein kinase family. RAF subfamily. In terms of assembly, interacts with KEG. Binds and recruited by EDR4 at the powdery mildew (e.g. G.cichoracearum) penetration site on the plasma membrane. Post-translationally, autophosphorylated.

It localises to the cell membrane. It is found in the endosome. Its subcellular location is the nucleus. The protein resides in the endoplasmic reticulum. The protein localises to the golgi apparatus. It localises to the trans-Golgi network. It is found in the early endosome. It catalyses the reaction L-seryl-[protein] + ATP = O-phospho-L-seryl-[protein] + ADP + H(+). It carries out the reaction L-threonyl-[protein] + ATP = O-phospho-L-threonyl-[protein] + ADP + H(+). In terms of biological role, MAPKKK serine/threonine-protein kinase involved in the regulation of a MAP kinase cascade (probably including MPK3 and MPK6) that negatively regulates salicylic acid- (SA-) dependent defense responses, abscisic acid (ABA) signaling, and ethylene-induced senescence. Also modulates stress response (e.g. drought) signaling and cell death, in an ORE9-dependent manner. Functions at a point of cross talk between ethylene, ABA and SA signaling that impinges on senescence and cell death. On the other hand, it confers sensitivity to various pathogens such as the fungus E.cichoracearum, the oomycete H.parasitica and the bacteria P.syringae pv. tomato DC3000. Required for resistance to some hemibiotrophic/necrotrophic fungal pathogens (e.g. C.gloeosporioides, C.higginsianum and A.brassicicola) through the induction of defensin expression, probably by repressing MYC2, an inhibitor of defensin genes (PDFs). Together with KEG, may regulate endocytic trafficking and/or the formation of signaling complexes on trans-Golgi network (TGN)/ early endosome (EE) vesicles during stress responses. The protein is Serine/threonine-protein kinase EDR1 (EDR1) of Arabidopsis thaliana (Mouse-ear cress).